The following is a 771-amino-acid chain: Transducin-like enhancer protein 3-B (771 aa).

The q domain stretch occupies residues 1 to 141 (MYPQGRHPAP…PLTQQQLQAQ (141 aa)). Low complexity predominate over residues 137–148 (QLQAQHLSHAAH). Disordered regions lie at residues 137–174 (QLQA…GSGS) and 196–360 (HHDL…MEAL). Positions 142–209 (HLSHAAHGPP…EHRERESSTN (68 aa)) are GP domain. Over residues 196-206 (HHDLEHRERES) the composition is skewed to basic and acidic residues. Residues 207–217 (STNNSVSPSDS) show a composition bias toward low complexity. Residues 210-278 (NSVSPSDSLR…TPRVSPSHSP (69 aa)) are ccN domain. 2 stretches are compositionally biased toward basic and acidic residues: residues 219 to 257 (RASE…KSDD) and 282 to 293 (GLDKARALKKDA). A Nuclear localization signal motif is present at residues 235–238 (KKRR). The SP domain stretch occupies residues 279 to 451 (PENGLDKARA…GGKPAYSFHV (173 aa)). Residues 294–309 (PNSPASVASSGSTPSS) show a composition bias toward low complexity. A phosphoserine mark is found at Ser-296 and Ser-299. Residues 310–319 (KAKDHPHNDK) show a composition bias toward basic and acidic residues. Residues 320–332 (SSTPGLKSNTPTP) are compositionally biased toward polar residues. WD repeat units lie at residues 483–521 (SHGE…SKSP), 529–568 (NRDN…PRIK), 573–612 (SSAP…LVRQ), 615–654 (GHTD…QLQQ), 656–695 (DFTS…KYQL), 697–736 (LHES…SIFQ), and 738–771 (KESS…EVIY).

It belongs to the WD repeat Groucho/TLE family. In terms of tissue distribution, at gastrulation, expression is absent within the axial mesoderm. After gastrulation is complete, expressed in the presomitic mesoderm, but expression in the tailbud doesn't begin until the six to seven somite stage, after which it becomes abundant. Expression is abundant throughout somitogenesis within the posterior half of the somites, but is absent from older somites. Also expressed in a dynamic manner within the neural plate.

It is found in the nucleus. Its function is as follows. Transcriptional corepressor that binds to a number of transcription factors. Inhibits the transcriptional activation mediated by CTNNB1 and TCF family members in Wnt signaling. The effects of full-length TLE family members may be modulated by association with dominant-negative AES. This chain is Transducin-like enhancer protein 3-B, found in Danio rerio (Zebrafish).